The chain runs to 417 residues: MQGPTLAVLGALLAVAVSLPTPAPRVTVYVDPPAYPMPRYNYTERWHTTGPIPSPFADGREQPVEVRYATSAAACDMLALIADPQVGRTLWEAVRRHARAYNATVIWYKIESGCARPLYYMEYTECEPRKHFGYCRYRTPPFWDSFLAGFAYPTDDELGLIMAAPARLVEGQYRRALYIDGTVAYTDFMVSLPAGDCWFSKLGAARGYTFGACFPARDYEQKKVLRLTYLTQYYPQEAHKAIVDYWFMRHGGVVPPYFEESKGYEPPPAADGGSPAPPGDDEAREDEGETEDGAAGREGNGGPPGPEGDGESQTPEANGGAEGEPKPGPSPDADRPEGWPSLEAITHPPPAPATPAAPDAVPVSVGIGIAAAAIACVAAAAAGAYFVYTRRRGAGPLPRKPKKLPAFGNVNYSALPG.

The first 18 residues, 1–18 (MQGPTLAVLGALLAVAVS), serve as a signal peptide directing secretion. Topologically, residues 19-360 (LPTPAPRVTV…APATPAAPDA (342 aa)) are virion surface. N41 and N102 each carry an N-linked (GlcNAc...) asparagine; by host glycan. Disulfide bonds link C75-C197, C114-C213, and C126-C135. Positions 259-356 (EESKGYEPPP…HPPPAPATPA (98 aa)) are disordered. Residues 279–292 (GDDEAREDEGETED) show a composition bias toward acidic residues. The chain crosses the membrane as a helical span at residues 361-389 (VPVSVGIGIAAAAIACVAAAAAGAYFVYT). Residues 390-417 (RRRGAGPLPRKPKKLPAFGNVNYSALPG) are Intravirion-facing.

Belongs to the herpesviridae glycoprotein D family.

It localises to the virion membrane. Its function is as follows. Envelope glycoprotein that binds to host cell entry receptors, promoting the virus entry into host cells. May trigger fusion with host membrane, by recruiting the fusion machinery composed of gB and gH/gL. This is Envelope glycoprotein D (gD) from Bovine herpesvirus 1.1 (strain Cooper) (BoHV-1).